The chain runs to 89 residues: Small ribosomal subunit protein uS15 (89 aa).

It belongs to the universal ribosomal protein uS15 family. As to quaternary structure, part of the 30S ribosomal subunit. Forms a bridge to the 50S subunit in the 70S ribosome, contacting the 23S rRNA.

Its function is as follows. One of the primary rRNA binding proteins, it binds directly to 16S rRNA where it helps nucleate assembly of the platform of the 30S subunit by binding and bridging several RNA helices of the 16S rRNA. In terms of biological role, forms an intersubunit bridge (bridge B4) with the 23S rRNA of the 50S subunit in the ribosome. The protein is Small ribosomal subunit protein uS15 of Rhodococcus erythropolis (strain PR4 / NBRC 100887).